Consider the following 406-residue polypeptide: Cysteine desulfurase (406 aa).

Lys226 is subject to N6-(pyridoxal phosphate)lysine. Cys364 functions as the Cysteine persulfide intermediate in the catalytic mechanism.

This sequence belongs to the class-V pyridoxal-phosphate-dependent aminotransferase family. Csd subfamily. As to quaternary structure, homodimer. Interacts with SufE and the SufBCD complex composed of SufB, SufC and SufD. The interaction with SufE is required to mediate the direct transfer of the sulfur atom from the S-sulfanylcysteine. The cofactor is pyridoxal 5'-phosphate.

The protein resides in the cytoplasm. It carries out the reaction (sulfur carrier)-H + L-cysteine = (sulfur carrier)-SH + L-alanine. It catalyses the reaction L-selenocysteine + AH2 = hydrogenselenide + L-alanine + A + H(+). It functions in the pathway cofactor biosynthesis; iron-sulfur cluster biosynthesis. Its function is as follows. Cysteine desulfurases mobilize the sulfur from L-cysteine to yield L-alanine, an essential step in sulfur metabolism for biosynthesis of a variety of sulfur-containing biomolecules. Component of the suf operon, which is activated and required under specific conditions such as oxidative stress and iron limitation. Acts as a potent selenocysteine lyase in vitro, that mobilizes selenium from L-selenocysteine. Selenocysteine lyase activity is however unsure in vivo. The chain is Cysteine desulfurase from Yersinia pestis bv. Antiqua (strain Antiqua).